A 328-amino-acid polypeptide reads, in one-letter code: MPERNPVAPPALPWLAIAGPTASGKTGAALAIARHWRQRGGPPVEIISVDSALVYRGMDIGTAKPSAAERAEVPHHLIDLIEPTAAYSAAEFAADAARLIGEIHGRGALPLLVGGTMLYFKVWLDGIDPLPTADAGVRAQIDQRARELGWPALHAELARVDPITAARLAPADAQRIQRALEVWQISGQPLSSLHTGRSASSAWAHSGLMLSLEPTSRAWLHQRIGERFEAMLAAGLIDEVEHLRARGDLHPDLPSMRCVGYRQTWEMLDGLWPSAELLERCSAATRQLAKRQLTWLRGMPRRQVLACDEPGLVERVLSRADAWQADAR.

19–26 (GPTASGKT) contacts ATP. 21-26 (TASGKT) is a substrate binding site. Interaction with substrate tRNA regions lie at residues 50-53 (DSAL), 174-178 (QRIQR), and 257-262 (RCVGYR).

This sequence belongs to the IPP transferase family. As to quaternary structure, monomer. Mg(2+) is required as a cofactor.

It carries out the reaction adenosine(37) in tRNA + dimethylallyl diphosphate = N(6)-dimethylallyladenosine(37) in tRNA + diphosphate. Functionally, catalyzes the transfer of a dimethylallyl group onto the adenine at position 37 in tRNAs that read codons beginning with uridine, leading to the formation of N6-(dimethylallyl)adenosine (i(6)A). The sequence is that of tRNA dimethylallyltransferase from Leptothrix cholodnii (strain ATCC 51168 / LMG 8142 / SP-6) (Leptothrix discophora (strain SP-6)).